We begin with the raw amino-acid sequence, 344 residues long: Polycomb group RING finger protein 2 (344 aa).

Residues 18–57 (CALCGGYFIDATTIVECLHSFCKTCIVRYLETNKYCPMCD) form an RING-type zinc finger. Glycyl lysine isopeptide (Lys-Gly) (interchain with G-Cter in SUMO2) cross-links involve residues K51 and K88. The Nuclear localization signal signature appears at 81-95 (KLVPGLFKDEMKRRR). A compositionally biased stretch (polar residues) spans 240-253 (TVPTPSEGTNTSGA). A disordered region spans residues 240–344 (TVPTPSEGTN…VNGAPVPPLT (105 aa)). The span at 263–313 (APSPATLPATSSSLPSPATPSHGSPSSHGPPATHPTSPTPPSTASGATTAA) shows a compositional bias: low complexity. The segment covering 314–328 (NGGSLNCLQTPSSTS) has biased composition (polar residues). T344 carries the phosphothreonine modification.

As to quaternary structure, exists as both a monomer and homodimer. Component of a PRC1-like complex. Interacts with CBX8, RING1 and RNF2. Interacts with CBX7. Interacts with PHC2. Post-translationally, phosphorylated. Homodimer formation is regulated by phosphorylation with only unphosphorylated proteins forming homodimers. Detected in all tissues examined with high expression found in placenta lung and kidney and low expression, in liver, pancreas and skeletal muscle.

It localises to the nucleus. In terms of biological role, transcriptional repressor. Binds specifically to the DNA sequence 5'-GACTNGACT-3'. Has tumor suppressor activity. May play a role in control of cell proliferation and/or neural cell development. Regulates proliferation of early T progenitor cells by maintaining expression of HES1. Also plays a role in antero-posterior specification of the axial skeleton and negative regulation of the self-renewal activity of hematopoietic stem cells. Component of a Polycomb group (PcG) multiprotein PRC1-like complex, a complex class required to maintain the transcriptionally repressive state of many genes, including Hox genes, throughout development. PcG PRC1 complex acts via chromatin remodeling and modification of histones; it mediates monoubiquitination of histone H2A 'Lys-119', rendering chromatin heritably changed in its expressibility. Within the PRC1-like complex, regulates RNF2 ubiquitin ligase activity. This chain is Polycomb group RING finger protein 2 (PCGF2), found in Homo sapiens (Human).